Consider the following 190-residue polypeptide: ATP synthase subunit delta (190 aa).

Belongs to the ATPase delta chain family. In terms of assembly, F-type ATPases have 2 components, F(1) - the catalytic core - and F(0) - the membrane proton channel. F(1) has five subunits: alpha(3), beta(3), gamma(1), delta(1), epsilon(1). F(0) has three main subunits: a(1), b(2) and c(10-14). The alpha and beta chains form an alternating ring which encloses part of the gamma chain. F(1) is attached to F(0) by a central stalk formed by the gamma and epsilon chains, while a peripheral stalk is formed by the delta and b chains.

The protein localises to the cell inner membrane. F(1)F(0) ATP synthase produces ATP from ADP in the presence of a proton or sodium gradient. F-type ATPases consist of two structural domains, F(1) containing the extramembraneous catalytic core and F(0) containing the membrane proton channel, linked together by a central stalk and a peripheral stalk. During catalysis, ATP synthesis in the catalytic domain of F(1) is coupled via a rotary mechanism of the central stalk subunits to proton translocation. In terms of biological role, this protein is part of the stalk that links CF(0) to CF(1). It either transmits conformational changes from CF(0) to CF(1) or is implicated in proton conduction. In Beijerinckia indica subsp. indica (strain ATCC 9039 / DSM 1715 / NCIMB 8712), this protein is ATP synthase subunit delta.